The sequence spans 1316 residues: DNA-directed RNA polymerase subunit beta' (1316 aa).

The Zn(2+) site is built by C60, C62, C75, and C78. D535, D537, and D539 together coordinate Mg(2+). The Zn(2+) site is built by C891, C968, C975, and C978.

The protein belongs to the RNA polymerase beta' chain family. In terms of assembly, the RNAP catalytic core consists of 2 alpha, 1 beta, 1 beta' and 1 omega subunit. When a sigma factor is associated with the core the holoenzyme is formed, which can initiate transcription. Mg(2+) serves as cofactor. The cofactor is Zn(2+).

The catalysed reaction is RNA(n) + a ribonucleoside 5'-triphosphate = RNA(n+1) + diphosphate. In terms of biological role, DNA-dependent RNA polymerase catalyzes the transcription of DNA into RNA using the four ribonucleoside triphosphates as substrates. The sequence is that of DNA-directed RNA polymerase subunit beta' from Mycobacterium bovis (strain BCG / Tokyo 172 / ATCC 35737 / TMC 1019).